We begin with the raw amino-acid sequence, 282 residues long: Transcription factor MYB20 (282 aa).

2 consecutive HTH myb-type domains span residues 9-61 (KVGL…TNYL) and 62-116 (RPDL…KKKL). DNA-binding regions (H-T-H motif) lie at residues 37–61 (WRAVPKLSGLLRCGKSCRLRWTNYL) and 89–112 (WSKIASHLPGRTDNEIKNHWNTHI).

In terms of tissue distribution, expressed in chalaza of mature seeds, cotyledons, rosette leaves, cauline leaves, veins of stems, mature siliques, sepals and styles. Expressed at low levels in roots.

It localises to the nucleus. In terms of biological role, transcription factor that acts as a positive regulator of abscisic acid (ABA) signaling in response to salt stress. Acts as a negative regulator ABI1, ABI2 and PP2CA, which are protein phosphatases 2C acting as negative regulator of ABA signaling. Binds to the DNA specific sequence and core element 5'-ACGT-3' found in the promoters of ABI1 and PP2CA to negatively regulate their expression during ABA-dependent salt stress response. This chain is Transcription factor MYB20, found in Arabidopsis thaliana (Mouse-ear cress).